Reading from the N-terminus, the 380-residue chain is MKWLVLLGLVAFSECIVKIPLRRLKTMRNVVSGKNMLNNFLKEHAYSLSQISFRGSNLTTHPLRNIKDLVYMGNITIGTPPQEFQVVFDTASSDLWVPSDFCTSPACSTHVRFRHLQSSTFRLTNKTFRITYGSGRMKGVVVHDTVRIGNLVSTDQPFGLSIEEYGFEGRIYDGVLGLNYPNISFSGAIPIFDKLKNQRAISEPVFAFYLSKDEREGSVVMFGGVDHRYYEGELNWVPLIQAGDWSVHMDRISIERKIIACSDGCKALVDTGTSDIVGPRRLVNNIHRLIGAIPRGSEHYVPCSEVNTLPSIVFTINGINYPVPGRAYILKDDRGRCYTTFQENRVSSSTETWYLGDVFLRLYFSVFDRGNDRIGLARAV.

The first 15 residues, methionine 1 to cysteine 15, serve as a signal peptide directing secretion. The propeptide at isoleucine 16–phenylalanine 53 is activation peptide. Asparagine 57 and asparagine 74 each carry an N-linked (GlcNAc...) asparagine glycan. A Peptidase A1 domain is found at tyrosine 71 to alanine 377. Aspartate 89 is a catalytic residue. Cysteine 102 and cysteine 107 form a disulfide bridge. Residues asparagine 125 and asparagine 182 are each glycosylated (N-linked (GlcNAc...) asparagine). Cysteine 261 and cysteine 265 are disulfide-bonded. The active site involves aspartate 270. Cysteine 303 and cysteine 337 form a disulfide bridge.

It belongs to the peptidase A1 family. Post-translationally, N-Glycosylated; the glycans terminate in either N-acetyl-galactosamine (GalNAc) or N-acetyllactosamine. Terminal GalNAc on Asn-linked glycans is greatly reduced prior to parturition while lactosamine-type N-glycans remain unaltered. In terms of tissue distribution, trophoblast and placental tissue. Produced specifically in the invasive binucleate cells of the placenta. Becomes detectable in maternal serum soon after implantation.

It is found in the secreted. The protein localises to the extracellular space. Its function is as follows. Appears to be proteolytically inactive. The chain is Pregnancy-associated glycoprotein 1 from Bos taurus (Bovine).